A 247-amino-acid polypeptide reads, in one-letter code: MQALLFLMALLLPSGAGAEEIIGGVESIPHSRPYMAHLDIVTEKGLRVICGGFLISRQFVLTAAHCKGREITVILGAHDVRKRESTQQKIKVEKQIIHESYNSVPNLHDIMLLKLEKKVELTPAVNVVPLPSPSDFIHPGAMCWAAGWGKTGVRDPTSYTLREVELRIMDEKACVDYRYYEYKFQVCVGSPTTLRAAFMGDSGGPLLCAGVAHGIVSYGHPDAKPPAIFTRVSTYVPWINAVINTSS.

A signal peptide spans Met1–Ala18. Residues Glu19–Glu20 constitute a propeptide, activation peptide. Residues Ile21–Asn244 enclose the Peptidase S1 domain. Cys50 and Cys66 form a disulfide bridge. Active-site charge relay system residues include His65 and Asp109. 2 cysteine pairs are disulfide-bonded: Cys143–Cys208 and Cys174–Cys187. The active-site Charge relay system is the Ser202.

Belongs to the peptidase S1 family. Granzyme subfamily.

Functionally, this enzyme, isolated from small intestine, specifically inactivates the apo forms of a certain group of intracellular pyridoxal phosphate-requiring enzymes. It has chymotrypsin-like specificity towards small substrates. The protein is Mast cell protease 2 (Mcpt2) of Rattus norvegicus (Rat).